Consider the following 322-residue polypeptide: Phosphatidylserine decarboxylase proenzyme (322 aa).

Catalysis depends on charge relay system; for autoendoproteolytic cleavage activity residues Asp90, His147, and Ser254. Ser254 serves as the catalytic Schiff-base intermediate with substrate; via pyruvic acid; for decarboxylase activity. The residue at position 254 (Ser254) is a Pyruvic acid (Ser); by autocatalysis. Residues 296–322 are disordered; that stretch reads EPAPLPAEEIKAEHDASPLVDNKKDDT. Over residues 303 to 322 the composition is skewed to basic and acidic residues; sequence EEIKAEHDASPLVDNKKDDT.

Belongs to the phosphatidylserine decarboxylase family. PSD-B subfamily. Prokaryotic type I sub-subfamily. As to quaternary structure, heterodimer of a large membrane-associated beta subunit and a small pyruvoyl-containing alpha subunit. Pyruvate is required as a cofactor. In terms of processing, is synthesized initially as an inactive proenzyme. Formation of the active enzyme involves a self-maturation process in which the active site pyruvoyl group is generated from an internal serine residue via an autocatalytic post-translational modification. Two non-identical subunits are generated from the proenzyme in this reaction, and the pyruvate is formed at the N-terminus of the alpha chain, which is derived from the carboxyl end of the proenzyme. The autoendoproteolytic cleavage occurs by a canonical serine protease mechanism, in which the side chain hydroxyl group of the serine supplies its oxygen atom to form the C-terminus of the beta chain, while the remainder of the serine residue undergoes an oxidative deamination to produce ammonia and the pyruvoyl prosthetic group on the alpha chain. During this reaction, the Ser that is part of the protease active site of the proenzyme becomes the pyruvoyl prosthetic group, which constitutes an essential element of the active site of the mature decarboxylase.

Its subcellular location is the cell membrane. It carries out the reaction a 1,2-diacyl-sn-glycero-3-phospho-L-serine + H(+) = a 1,2-diacyl-sn-glycero-3-phosphoethanolamine + CO2. It functions in the pathway phospholipid metabolism; phosphatidylethanolamine biosynthesis; phosphatidylethanolamine from CDP-diacylglycerol: step 2/2. Functionally, catalyzes the formation of phosphatidylethanolamine (PtdEtn) from phosphatidylserine (PtdSer). In Salmonella dublin (strain CT_02021853), this protein is Phosphatidylserine decarboxylase proenzyme.